The following is a 29-amino-acid chain: Histone H2B (29 aa).

The tract at residues 1 to 29 (MPEPAKSAPKKGSTRTAAKGGKKRRKSRK) is disordered. 2 positions are modified to N6-acetyllysine: Lys6 and Lys11. Ser13 carries the post-translational modification Phosphoserine. Positions 20 to 29 (GGKKRRKSRK) are enriched in basic residues.

This sequence belongs to the histone H2B family. In terms of assembly, the nucleosome is a histone octamer containing two molecules each of H2A, H2B, H3 and H4 assembled in one H3-H4 heterotetramer and two H2A-H2B heterodimers. The octamer wraps approximately 147 bp of DNA. Post-translationally, monoubiquitination at the C-terminal Lys gives a specific tag for epigenetic transcriptional activation and is also prerequisite for histone H3 'Lys-4' and 'Lys-79' methylation. In terms of processing, phosphorylated during apoptosis; which facilitates apoptotic chromatin condensation.

The protein localises to the nucleus. The protein resides in the chromosome. Core component of nucleosome. Nucleosomes wrap and compact DNA into chromatin, limiting DNA accessibility to the cellular machineries which require DNA as a template. Histones thereby play a central role in transcription regulation, DNA repair, DNA replication and chromosomal stability. DNA accessibility is regulated via a complex set of post-translational modifications of histones, also called histone code, and nucleosome remodeling. The protein is Histone H2B of Cyprinus carpio (Common carp).